Consider the following 226-residue polypeptide: UPF0319 protein SO_1816 (226 aa).

The first 21 residues, 1 to 21 (MKSLLPISSLLVLLGSASVSA), serve as a signal peptide directing secretion.

This sequence belongs to the UPF0319 family.

The polypeptide is UPF0319 protein SO_1816 (Shewanella oneidensis (strain ATCC 700550 / JCM 31522 / CIP 106686 / LMG 19005 / NCIMB 14063 / MR-1)).